The sequence spans 82 residues: Small ribosomal subunit protein uS17 (82 aa).

This sequence belongs to the universal ribosomal protein uS17 family. As to quaternary structure, part of the 30S ribosomal subunit.

Its function is as follows. One of the primary rRNA binding proteins, it binds specifically to the 5'-end of 16S ribosomal RNA. This is Small ribosomal subunit protein uS17 from Rhodopseudomonas palustris (strain TIE-1).